We begin with the raw amino-acid sequence, 251 residues long: MKKTGYFLLAVIVIVAAAGVGYWKFSGNPDALREIVLERCLPDQLQHQNPAPCAEVKPRAGYVIFKDRHGPLQYLLMPTYRINGTESPLLLEPATPNFFWLAWQARGYMSKKYGHDIPDSAVSLAINSRLGRSQDHLHIHISCIRPDVREQLDNDLTRISTRWLPLPGDLMGHEYLARRVTESELAQRSPFMMLAEEVPEARDHMGRYALAVVRQSDDSFVLLATERNLLTLNRASAEEIQDHSCAILSSR.

The helical transmembrane segment at 5 to 25 (GYFLLAVIVIVAAAGVGYWKF) threads the bilayer.

This sequence belongs to the Cdh family.

The protein localises to the cell inner membrane. It catalyses the reaction a CDP-1,2-diacyl-sn-glycerol + H2O = a 1,2-diacyl-sn-glycero-3-phosphate + CMP + 2 H(+). It participates in phospholipid metabolism; CDP-diacylglycerol degradation; phosphatidate from CDP-diacylglycerol: step 1/1. The protein is CDP-diacylglycerol pyrophosphatase of Salmonella typhi.